Consider the following 67-residue polypeptide: Conotoxin Pu5.1 (67 aa).

A signal peptide spans 1 to 22; that stretch reads MRCVPVFVILLLLIASTPSVDA. A propeptide spanning residues 23–51 is cleaved from the precursor; the sequence is RPNPKDDVPLASFHEDANGILQMLWKKGR. Tryptophan amide is present on Trp-63.

The protein belongs to the conotoxin T superfamily. Contains 2 disulfide bonds that can be either 'C1-C3, C2-C4' or 'C1-C4, C2-C3', since these disulfide connectivities have been observed for conotoxins with cysteine framework V (for examples, see AC P0DQQ7 and AC P81755). In terms of tissue distribution, expressed by the venom duct.

The protein localises to the secreted. This is Conotoxin Pu5.1 from Conus pulicarius (Flea-bitten cone).